The primary structure comprises 548 residues: ATP synthase subunit alpha (548 aa).

172-179 lines the ATP pocket; it reads GDRKTGKT.

Belongs to the ATPase alpha/beta chains family. As to quaternary structure, F-type ATPases have 2 components, CF(1) - the catalytic core - and CF(0) - the membrane proton channel. CF(1) has five subunits: alpha(3), beta(3), gamma(1), delta(1), epsilon(1). CF(0) has three main subunits: a(1), b(2) and c(9-12). The alpha and beta chains form an alternating ring which encloses part of the gamma chain. CF(1) is attached to CF(0) by a central stalk formed by the gamma and epsilon chains, while a peripheral stalk is formed by the delta and b chains.

It is found in the cell membrane. The enzyme catalyses ATP + H2O + 4 H(+)(in) = ADP + phosphate + 5 H(+)(out). Produces ATP from ADP in the presence of a proton gradient across the membrane. The alpha chain is a regulatory subunit. The sequence is that of ATP synthase subunit alpha from Mycolicibacterium smegmatis (strain ATCC 700084 / mc(2)155) (Mycobacterium smegmatis).